A 648-amino-acid polypeptide reads, in one-letter code: Acetyl-coenzyme A synthetase (648 aa).

CoA contacts are provided by residues 190–193 (RGGR) and Thr-310. ATP is bound by residues 386-388 (GEP), 410-415 (DTWWQT), Asp-499, and Arg-514. Ser-522 serves as a coordination point for CoA. Arg-525 contacts ATP. Val-536, His-538, and Val-541 together coordinate Mg(2+). CoA is bound at residue Arg-583. Lys-608 carries the N6-acetyllysine modification.

This sequence belongs to the ATP-dependent AMP-binding enzyme family. Requires Mg(2+) as cofactor. In terms of processing, acetylated. Deacetylation by the SIR2-homolog deacetylase activates the enzyme.

The catalysed reaction is acetate + ATP + CoA = acetyl-CoA + AMP + diphosphate. Catalyzes the conversion of acetate into acetyl-CoA (AcCoA), an essential intermediate at the junction of anabolic and catabolic pathways. AcsA undergoes a two-step reaction. In the first half reaction, AcsA combines acetate with ATP to form acetyl-adenylate (AcAMP) intermediate. In the second half reaction, it can then transfer the acetyl group from AcAMP to the sulfhydryl group of CoA, forming the product AcCoA. This is Acetyl-coenzyme A synthetase from Methylobacterium radiotolerans (strain ATCC 27329 / DSM 1819 / JCM 2831 / NBRC 15690 / NCIMB 10815 / 0-1).